Here is a 620-residue protein sequence, read N- to C-terminus: 1-deoxy-D-xylulose-5-phosphate synthase (620 aa).

Residues His80 and 121-123 (GHS) each bind thiamine diphosphate. Asp152 contacts Mg(2+). Thiamine diphosphate contacts are provided by residues 153–154 (GA), Asn181, Tyr288, and Glu370. Asn181 contributes to the Mg(2+) binding site.

Belongs to the transketolase family. DXPS subfamily. Homodimer. Mg(2+) serves as cofactor. It depends on thiamine diphosphate as a cofactor.

The catalysed reaction is D-glyceraldehyde 3-phosphate + pyruvate + H(+) = 1-deoxy-D-xylulose 5-phosphate + CO2. It functions in the pathway metabolic intermediate biosynthesis; 1-deoxy-D-xylulose 5-phosphate biosynthesis; 1-deoxy-D-xylulose 5-phosphate from D-glyceraldehyde 3-phosphate and pyruvate: step 1/1. Functionally, catalyzes the acyloin condensation reaction between C atoms 2 and 3 of pyruvate and glyceraldehyde 3-phosphate to yield 1-deoxy-D-xylulose-5-phosphate (DXP). The polypeptide is 1-deoxy-D-xylulose-5-phosphate synthase (Shigella dysenteriae serotype 1 (strain Sd197)).